A 433-amino-acid chain; its full sequence is Peptidoglycan glycosyltransferase RodA (433 aa).

12 consecutive transmembrane segments (helical) span residues 9-29 (FDYL…LFIY), 44-64 (YLKQ…VSMY), 74-94 (TLIF…GRYV), 100-120 (WIGV…AYIL), 158-178 (LGTA…AGFP), 181-201 (LIFA…LPLW), 221-241 (LSLF…VGYL), 249-269 (YWIT…LLGV), 295-315 (WHII…MGYL), 341-361 (WGFV…LHTL), 378-398 (GVLG…MGIM), and 400-420 (ITGI…TAMI).

It belongs to the SEDS family. MrdB/RodA subfamily.

The protein resides in the cell inner membrane. It catalyses the reaction [GlcNAc-(1-&gt;4)-Mur2Ac(oyl-L-Ala-gamma-D-Glu-L-Lys-D-Ala-D-Ala)](n)-di-trans,octa-cis-undecaprenyl diphosphate + beta-D-GlcNAc-(1-&gt;4)-Mur2Ac(oyl-L-Ala-gamma-D-Glu-L-Lys-D-Ala-D-Ala)-di-trans,octa-cis-undecaprenyl diphosphate = [GlcNAc-(1-&gt;4)-Mur2Ac(oyl-L-Ala-gamma-D-Glu-L-Lys-D-Ala-D-Ala)](n+1)-di-trans,octa-cis-undecaprenyl diphosphate + di-trans,octa-cis-undecaprenyl diphosphate + H(+). Its pathway is cell wall biogenesis; peptidoglycan biosynthesis. Functionally, peptidoglycan polymerase that is essential for cell wall elongation. In Treponema pallidum (strain Nichols), this protein is Peptidoglycan glycosyltransferase RodA.